Here is a 139-residue protein sequence, read N- to C-terminus: MLERIGISLEDGLLEQFDKLIAEKGYVNRSEAIRDLIRDALVQRAFTESSGREERVAVVTLVYDHDSSSLAQKLAHIQHENHRAVVSALHVHMDPHNCLEVLVLRGRGKDVVAMGESLVATRGVKYGKLVPATAGHDLG.

The Ni(2+) site is built by His79, His90, His92, and Cys98.

Belongs to the transcriptional regulatory CopG/NikR family. Ni(2+) serves as cofactor.

In terms of biological role, transcriptional regulator. The chain is Putative nickel-responsive regulator from Anaeromyxobacter dehalogenans (strain 2CP-1 / ATCC BAA-258).